The sequence spans 275 residues: Large ribosomal subunit protein uL2 (275 aa).

The tract at residues A224–K275 is disordered. Positions K264–K275 are enriched in basic and acidic residues.

Belongs to the universal ribosomal protein uL2 family. As to quaternary structure, part of the 50S ribosomal subunit. Forms a bridge to the 30S subunit in the 70S ribosome.

Its function is as follows. One of the primary rRNA binding proteins. Required for association of the 30S and 50S subunits to form the 70S ribosome, for tRNA binding and peptide bond formation. It has been suggested to have peptidyltransferase activity; this is somewhat controversial. Makes several contacts with the 16S rRNA in the 70S ribosome. This chain is Large ribosomal subunit protein uL2, found in Thermoanaerobacter pseudethanolicus (strain ATCC 33223 / 39E) (Clostridium thermohydrosulfuricum).